A 105-amino-acid polypeptide reads, in one-letter code: Large ribosomal subunit protein bL21 (105 aa).

The protein belongs to the bacterial ribosomal protein bL21 family. As to quaternary structure, part of the 50S ribosomal subunit. Contacts protein L20.

Its function is as follows. This protein binds to 23S rRNA in the presence of protein L20. The sequence is that of Large ribosomal subunit protein bL21 from Desulfatibacillum aliphaticivorans.